The primary structure comprises 209 residues: Octanoyltransferase (209 aa).

The 180-residue stretch at 30-209 (DHKPEIIYLV…IQTEFNKIFK (180 aa)) folds into the BPL/LPL catalytic domain. Residues 69–76 (RGGKFTFH), 143–145 (AIG), and 156–158 (GVA) contribute to the substrate site. Cys-174 functions as the Acyl-thioester intermediate in the catalytic mechanism.

This sequence belongs to the LipB family.

The protein resides in the cytoplasm. The enzyme catalyses octanoyl-[ACP] + L-lysyl-[protein] = N(6)-octanoyl-L-lysyl-[protein] + holo-[ACP] + H(+). It functions in the pathway protein modification; protein lipoylation via endogenous pathway; protein N(6)-(lipoyl)lysine from octanoyl-[acyl-carrier-protein]: step 1/2. Catalyzes the transfer of endogenously produced octanoic acid from octanoyl-acyl-carrier-protein onto the lipoyl domains of lipoate-dependent enzymes. Lipoyl-ACP can also act as a substrate although octanoyl-ACP is likely to be the physiological substrate. The chain is Octanoyltransferase from Rickettsia conorii (strain ATCC VR-613 / Malish 7).